Reading from the N-terminus, the 388-residue chain is Mannitol-1-phosphate 5-dehydrogenase (388 aa).

NAD(+) is bound at residue 5 to 16; sequence AVHFGGGNIGRG. Residue lysine 213 is part of the active site.

This sequence belongs to the mannitol dehydrogenase family. In terms of assembly, monomer.

The catalysed reaction is D-mannitol 1-phosphate + NAD(+) = beta-D-fructose 6-phosphate + NADH + H(+). In terms of biological role, catalyzes the NAD(H)-dependent interconversion of D-fructose 6-phosphate and D-mannitol 1-phosphate in the mannitol metabolic pathway. This Coccidioides immitis (strain RS) (Valley fever fungus) protein is Mannitol-1-phosphate 5-dehydrogenase.